The primary structure comprises 158 residues: SsrA-binding protein (158 aa).

The disordered stretch occupies residues 133–158 (QLHDKRETEKKRDWNKEKGRLLRDKH).

This sequence belongs to the SmpB family.

It is found in the cytoplasm. Required for rescue of stalled ribosomes mediated by trans-translation. Binds to transfer-messenger RNA (tmRNA), required for stable association of tmRNA with ribosomes. tmRNA and SmpB together mimic tRNA shape, replacing the anticodon stem-loop with SmpB. tmRNA is encoded by the ssrA gene; the 2 termini fold to resemble tRNA(Ala) and it encodes a 'tag peptide', a short internal open reading frame. During trans-translation Ala-aminoacylated tmRNA acts like a tRNA, entering the A-site of stalled ribosomes, displacing the stalled mRNA. The ribosome then switches to translate the ORF on the tmRNA; the nascent peptide is terminated with the 'tag peptide' encoded by the tmRNA and targeted for degradation. The ribosome is freed to recommence translation, which seems to be the essential function of trans-translation. The protein is SsrA-binding protein of Beijerinckia indica subsp. indica (strain ATCC 9039 / DSM 1715 / NCIMB 8712).